The primary structure comprises 382 residues: 1-deoxy-D-xylulose 5-phosphate reductoisomerase (382 aa).

The NADPH site is built by serine 10, glycine 11, serine 12, isoleucine 13, glycine 36, lysine 37, asparagine 38, and asparagine 121. 1-deoxy-D-xylulose 5-phosphate is bound at residue lysine 122. Residue glutamate 123 participates in NADPH binding. Aspartate 147 serves as a coordination point for Mn(2+). Positions 148, 149, 173, and 196 each coordinate 1-deoxy-D-xylulose 5-phosphate. A Mn(2+)-binding site is contributed by glutamate 149. Residue glycine 202 coordinates NADPH. 1-deoxy-D-xylulose 5-phosphate is bound by residues serine 209, asparagine 214, lysine 215, and glutamate 218. Residue glutamate 218 coordinates Mn(2+).

It belongs to the DXR family. It depends on Mg(2+) as a cofactor. Mn(2+) is required as a cofactor.

It carries out the reaction 2-C-methyl-D-erythritol 4-phosphate + NADP(+) = 1-deoxy-D-xylulose 5-phosphate + NADPH + H(+). Its pathway is isoprenoid biosynthesis; isopentenyl diphosphate biosynthesis via DXP pathway; isopentenyl diphosphate from 1-deoxy-D-xylulose 5-phosphate: step 1/6. Functionally, catalyzes the NADPH-dependent rearrangement and reduction of 1-deoxy-D-xylulose-5-phosphate (DXP) to 2-C-methyl-D-erythritol 4-phosphate (MEP). The polypeptide is 1-deoxy-D-xylulose 5-phosphate reductoisomerase (Geobacillus kaustophilus (strain HTA426)).